The following is a 177-amino-acid chain: Protein-export protein SecB (177 aa).

The segment at 1-22 (MSDENNSGAAAPEAQNPGQNAA) is disordered. Over residues 8 to 22 (GAAAPEAQNPGQNAA) the composition is skewed to low complexity.

The protein belongs to the SecB family. Homotetramer, a dimer of dimers. One homotetramer interacts with 1 SecA dimer.

It localises to the cytoplasm. Its function is as follows. One of the proteins required for the normal export of preproteins out of the cell cytoplasm. It is a molecular chaperone that binds to a subset of precursor proteins, maintaining them in a translocation-competent state. It also specifically binds to its receptor SecA. This chain is Protein-export protein SecB, found in Paracoccus denitrificans (strain Pd 1222).